We begin with the raw amino-acid sequence, 260 residues long: Ava biosynthesis cluster protein M (260 aa).

A signal peptide spans 1–15 (MKVLVLGLCRTGTSS).

This sequence belongs to the cytochrome P450 family.

Its pathway is secondary metabolite biosynthesis. In terms of biological role, part of the cluster that mediates the biosynthesis of a highly modified cyclo-arginine-tryptophan dipeptide (cRW). The first step of the pathway is perfornmed by the arginine-containing cyclodipeptide synthase (RCPDS) avaA that acts as the scaffold-generating enzyme and is responsible for formation of the cyclo-Arg-Trp (cRW) diketopiperazine. AvaB then acts as a multifunctional flavoenzyme that is responsible for generating the cyclo-Arg-formylkynurenine DKP, which can be deformylated by avaC. AvaB then further catalyzes an additional N-oxidation followed by cyclization and dehydration. The next step is an N-acetylation of the guanidine group catalyzed by the arginine N-acetyltransferase avaD. The roles of the additional enzymes identified within the ava cluster still have to be determined. The polypeptide is Ava biosynthesis cluster protein M (Aspergillus versicolor).